Reading from the N-terminus, the 956-residue chain is Nitrogen regulatory protein NUT1 (956 aa).

Basic and acidic residues predominate over residues 1–12 (MNPTITEHDFRF). Disordered stretches follow at residues 1-51 (MNPT…NDAQ), 120-222 (QQEE…PAAA), 240-262 (KTSI…FQVP), 348-373 (GQSI…SQVS), and 524-661 (TLPG…DAPT). Low complexity predominate over residues 15 to 37 (RPAAPGRDPGSDSSDDPLPASLR). Composition is skewed to polar residues over residues 42–51 (DRQSAFNDAQ), 131–153 (PLKT…QKKS), 167–194 (SHGS…NAIS), and 208–217 (AAQSQFNPQS). The span at 588 to 613 (NASTTAIPNSQMQYEQQGVQGHTNSP) shows a compositional bias: polar residues. 2 stretches are compositionally biased toward low complexity: residues 623 to 633 (SGFSSVVHSRP) and 640 to 661 (SKNG…DAPT). The GATA-type zinc-finger motif lies at 663–687 (CTNCATQTTPLWRRNPEGQPLCNAC). Positions 708–890 (KKRNRGSGSN…AATRPSGFGT (183 aa)) are disordered. The segment covering 713–760 (GSGSNVPGATSGSRSKKGATSTAVSGTNTRKNSSLAISRTASTTNVQV) has biased composition (polar residues). Residues 812 to 839 (VVPIAAAPPKNMPGPGAAAAARTVALGP) show a composition bias toward low complexity. Composition is skewed to polar residues over residues 849-863 (SPAN…NANH) and 872-881 (PENSTGSNEA).

Its subcellular location is the nucleus. Functionally, major nitrogen regulatory protein; activates expression of nitrogen-regulated genes. The polypeptide is Nitrogen regulatory protein NUT1 (NUT1) (Pyricularia oryzae (strain 70-15 / ATCC MYA-4617 / FGSC 8958) (Rice blast fungus)).